The primary structure comprises 342 residues: Ribosomal RNA small subunit methyltransferase C (342 aa).

This sequence belongs to the methyltransferase superfamily. RsmC family. Monomer.

It localises to the cytoplasm. The catalysed reaction is guanosine(1207) in 16S rRNA + S-adenosyl-L-methionine = N(2)-methylguanosine(1207) in 16S rRNA + S-adenosyl-L-homocysteine + H(+). In terms of biological role, specifically methylates the guanine in position 1207 of 16S rRNA in the 30S particle. This is Ribosomal RNA small subunit methyltransferase C from Shewanella oneidensis (strain ATCC 700550 / JCM 31522 / CIP 106686 / LMG 19005 / NCIMB 14063 / MR-1).